The primary structure comprises 259 residues: Small ribosomal subunit protein eS4 (259 aa).

Residues 41-100 (LPLSLFLRNRLKYALNYTEAKKILTQRVVRVDGKVRTCHKFPTGFMDVVAIERTNEYFRM) form the S4 RNA-binding domain.

Belongs to the eukaryotic ribosomal protein eS4 family.

The polypeptide is Small ribosomal subunit protein eS4 (rps-4) (Caenorhabditis elegans).